A 1070-amino-acid chain; its full sequence is Carbamoyl phosphate synthase large chain (1070 aa).

The tract at residues 1–399 is carboxyphosphate synthetic domain; it reads MPKREDIKKV…SLLKAFKSLD (399 aa). ATP-binding residues include Arg129, Arg169, Gly175, Gly176, Glu208, Val210, Glu215, Gly241, Val242, His243, Gln284, and Glu296. The region spanning 133–325 is the ATP-grasp 1 domain; sequence KETMLRIGEK…IARVTAKIAI (193 aa). Positions 284, 296, and 298 each coordinate Mg(2+). Residues Gln284, Glu296, and Asn298 each contribute to the Mn(2+) site. The interval 400-540 is oligomerization domain; it reads IDSQLGNKRW…YSTYEDTCET (141 aa). Residues 541–931 are carbamoyl phosphate synthetic domain; the sequence is NPTDRKKILI…YKAELAADNL (391 aa). The ATP-grasp 2 domain occupies 672-863; the sequence is YVLMQKFGIL…LAKIAARVIA (192 aa). Positions 708, 747, 749, 754, 779, 780, 781, 782, 822, and 834 each coordinate ATP. Gln822, Glu834, and Asn836 together coordinate Mg(2+). Residues Gln822, Glu834, and Asn836 each contribute to the Mn(2+) site. The MGS-like domain occupies 930–1070; sequence NLLPLTGKVF…INEYHKEMGL (141 aa). The tract at residues 932 to 1070 is allosteric domain; that stretch reads LPLTGKVFLS…INEYHKEMGL (139 aa).

The protein belongs to the CarB family. Composed of two chains; the small (or glutamine) chain promotes the hydrolysis of glutamine to ammonia, which is used by the large (or ammonia) chain to synthesize carbamoyl phosphate. Tetramer of heterodimers (alpha,beta)4. Mg(2+) is required as a cofactor. Requires Mn(2+) as cofactor.

The enzyme catalyses hydrogencarbonate + L-glutamine + 2 ATP + H2O = carbamoyl phosphate + L-glutamate + 2 ADP + phosphate + 2 H(+). It carries out the reaction hydrogencarbonate + NH4(+) + 2 ATP = carbamoyl phosphate + 2 ADP + phosphate + 2 H(+). It functions in the pathway amino-acid biosynthesis; L-arginine biosynthesis; carbamoyl phosphate from bicarbonate: step 1/1. It participates in pyrimidine metabolism; UMP biosynthesis via de novo pathway; (S)-dihydroorotate from bicarbonate: step 1/3. In terms of biological role, large subunit of the glutamine-dependent carbamoyl phosphate synthetase (CPSase). CPSase catalyzes the formation of carbamoyl phosphate from the ammonia moiety of glutamine, carbonate, and phosphate donated by ATP, constituting the first step of 2 biosynthetic pathways, one leading to arginine and/or urea and the other to pyrimidine nucleotides. The large subunit (synthetase) binds the substrates ammonia (free or transferred from glutamine from the small subunit), hydrogencarbonate and ATP and carries out an ATP-coupled ligase reaction, activating hydrogencarbonate by forming carboxy phosphate which reacts with ammonia to form carbamoyl phosphate. The chain is Carbamoyl phosphate synthase large chain from Methanosarcina acetivorans (strain ATCC 35395 / DSM 2834 / JCM 12185 / C2A).